The primary structure comprises 324 residues: D-alanine--D-alanine ligase (324 aa).

One can recognise an ATP-grasp domain in the interval 121 to 321 (NQYLKGFGIR…IKDVMTDIIE (201 aa)). Position 149-204 (149-204 (INKIGLPCFIKPNAGGSSFGVTKVKTKEDIQPAIEKAFEESDEVMIEAFMKGTEIT)) interacts with ATP. Mg(2+) contacts are provided by D275, E288, and N290.

The protein belongs to the D-alanine--D-alanine ligase family. Mg(2+) is required as a cofactor. It depends on Mn(2+) as a cofactor.

The protein resides in the cytoplasm. The catalysed reaction is 2 D-alanine + ATP = D-alanyl-D-alanine + ADP + phosphate + H(+). It functions in the pathway cell wall biogenesis; peptidoglycan biosynthesis. Its function is as follows. Cell wall formation. The polypeptide is D-alanine--D-alanine ligase (Phocaeicola vulgatus (strain ATCC 8482 / DSM 1447 / JCM 5826 / CCUG 4940 / NBRC 14291 / NCTC 11154) (Bacteroides vulgatus)).